The following is a 238-amino-acid chain: Cadherin-2 (238 aa).

Cadherin domains are found at residues 1–46 (TKPL…RPEF), 47–161 (LHQV…PPEF), and 162–238 (TAMT…RMFV). Residues 1-238 (TKPLDRELIA…IDFETNRMFV (238 aa)) lie on the Extracellular side of the membrane. Residues aspartate 5, glutamate 7, aspartate 38, methionine 39, asparagine 40, aspartate 41, and asparagine 42 each contribute to the Ca(2+) site. An N-linked (GlcNAc...) asparagine glycan is attached at asparagine 52. Aspartate 72, aspartate 74, and asparagine 80 together coordinate Ca(2+). N-linked (GlcNAc...) asparagine glycosylation is present at asparagine 104. Aspartate 132 is a binding site for Ca(2+). N-linked (GlcNAc...) asparagine glycosylation occurs at asparagine 181.

In terms of assembly, homodimer (via extracellular region). Can also form heterodimers with other cadherins (via extracellular region). Dimerization occurs in trans, i.e. with a cadherin chain from another cell. Interacts with CDCP1. Interacts with PCDH8; this complex may also include TAOK2. The interaction with PCDH8 may lead to internalization through TAOK2/p38 MAPK pathway. Identified in a complex containing FGFR4, NCAM1, CDH2, PLCG1, FRS2, SRC, SHC1, GAP43 and CTTN. May interact with OBSCN (via protein kinase domain 2). In terms of processing, cleaved by MMP24. Ectodomain cleavage leads to the generation of a soluble 90 kDa N-terminal soluble fragment and a 45 kDa membrane-bound C-terminal fragment 1 (CTF1), which is further cleaved by gamma-secretase into a 35 kDa. Cleavage in neural stem cells by MMP24 affects CDH2-mediated anchorage of neural stem cells to ependymocytes in the adult subependymal zone, leading to modulate neural stem cell quiescence. May be phosphorylated by OBSCN.

It localises to the cell membrane. Its subcellular location is the sarcolemma. The protein resides in the cell junction. It is found in the cell surface. The protein localises to the desmosome. It localises to the adherens junction. Its function is as follows. Calcium-dependent cell adhesion protein; preferentially mediates homotypic cell-cell adhesion by dimerization with a CDH2 chain from another cell. Cadherins may thus contribute to the sorting of heterogeneous cell types. Acts as a regulator of neural stem cells quiescence by mediating anchorage of neural stem cells to ependymocytes in the adult subependymal zone: upon cleavage by MMP24, CDH2-mediated anchorage is affected, leading to modulate neural stem cell quiescence. Plays a role in cell-to-cell junction formation between pancreatic beta cells and neural crest stem (NCS) cells, promoting the formation of processes by NCS cells. Required for proper neurite branching. Required for pre- and postsynaptic organization. CDH2 may be involved in neuronal recognition mechanism. In hippocampal neurons, may regulate dendritic spine density. This chain is Cadherin-2 (CDH2), found in Cricetulus griseus (Chinese hamster).